The following is a 552-amino-acid chain: 4-coumarate--CoA ligase-like 3 (552 aa).

The ATP site is built by Ser-207, Ser-208, Gly-209, Thr-210, Thr-211, and Lys-215. Residue Phe-252 coordinates (E)-4-coumaroyl-AMP. Residue Arg-273 participates in CoA binding. Positions 275–346 are SBD1; the sequence is GLDDMMQAVE…EKYPTVNIFQ (72 aa). Residues Gly-324, Gln-346, Gly-347, and Thr-351 each contribute to the (E)-4-coumaroyl-AMP site. ATP contacts are provided by Gln-346, Gly-347, Thr-351, Asp-432, and Arg-447. Residues 347–411 are SBD2; that stretch reads GYALTESHGS…LKGPSISKGY (65 aa). Residues Lys-449 and Lys-453 each contribute to the (E)-4-coumaroyl-AMP site. Lys-455 and Gly-456 together coordinate CoA. An ATP-binding site is contributed by Lys-538. Residues 550 to 552 carry the Microbody targeting signal motif; that stretch reads SKL.

It belongs to the ATP-dependent AMP-binding enzyme family. It depends on Mg(2+) as a cofactor.

It localises to the peroxisome. It catalyses the reaction (E)-4-coumarate + ATP + CoA = (E)-4-coumaroyl-CoA + AMP + diphosphate. It carries out the reaction (E)-4-coumarate + ATP + H(+) = (E)-4-coumaroyl-AMP + diphosphate. The enzyme catalyses (E)-4-coumaroyl-AMP + CoA = (E)-4-coumaroyl-CoA + AMP + H(+). Its function is as follows. Carboxylate--CoA ligase that may use 4-coumarate as substrate. Follows a two-step reaction mechanism, wherein the carboxylate substrate first undergoes adenylation by ATP, followed by a thioesterification in the presence of CoA to yield the final CoA thioester. This Arabidopsis thaliana (Mouse-ear cress) protein is 4-coumarate--CoA ligase-like 3.